We begin with the raw amino-acid sequence, 326 residues long: PSKSGPRPSKSGPRPSKSGPRPSKSGPRPSKSGPRPEKCGSAMRKAEAEKCAKRKGRFSASKCRCTSAGKPSKSEPRTERPTTCVESSESDEVTPTPEVPTTCVDSSESRESPVCDDAMRKSEGEKCANLGGKFNAENCKCTPEPVTEGPTTCVESSEGDDSLVCDDEMRRSEAEKCTKIGGKFDSETCKCTSEPVTEGPTTCLESSESDEVTTKKPCDCTCAPECKRRKMIIDVLLKYFYRDVYDKNCCKENCKCDGAKFPECEESNSKQSGMFDILAKLFKPQGGDFEAGSVEVDGKKLTSEKKEKFGKALQDAVKGLEDVLNS.

Residues 1–33 (PSKSGPRPSKSGPRPSKSGPRPSKSGPRPSKSG) show a composition bias toward low complexity. Positions 1 to 119 (PSKSGPRPSK…RESPVCDDAM (119 aa)) are disordered. A compositionally biased stretch (basic and acidic residues) spans 34-51 (PRPEKCGSAMRKAEAEKC). Over residues 93–102 (VTPTPEVPTT) the composition is skewed to low complexity. Basic and acidic residues predominate over residues 107–119 (SESRESPVCDDAM).

Salivary gland.

It is found in the secreted. Its function is as follows. Used by the larvae to construct a supramolecular structure, the larval tube. The chain is Balbiani ring protein 1 (BR1) from Chironomus pallidivittatus (Midge).